Here is a 97-residue protein sequence, read N- to C-terminus: Large ribosomal subunit protein eL21 (97 aa).

The protein belongs to the eukaryotic ribosomal protein eL21 family.

The polypeptide is Large ribosomal subunit protein eL21 (rpl21e) (Archaeoglobus fulgidus (strain ATCC 49558 / DSM 4304 / JCM 9628 / NBRC 100126 / VC-16)).